A 1049-amino-acid polypeptide reads, in one-letter code: GPI inositol-deacylase (1049 aa).

The chain crosses the membrane as a helical span at residues 39–59 (ACSAYTLVTTALGFAAFFLML). Ser-222 is an active-site residue. 8 helical membrane-spanning segments follow: residues 699-719 (LWMR…ALVL), 742-762 (CMYS…ITLA), 798-818 (PFFW…CVMV), 867-887 (ILLS…VLCI), 917-937 (SIFI…VVWI), 944-964 (WLTP…ILLV), 986-1006 (VFLF…AYVL), and 1009-1029 (LANI…GLAF).

The protein belongs to the GPI inositol-deacylase family.

The protein resides in the endoplasmic reticulum membrane. Its function is as follows. Involved in inositol deacylation of GPI-anchored proteins which plays important roles in the quality control and ER-associated degradation of GPI-anchored proteins. The chain is GPI inositol-deacylase (BST1) from Phaeosphaeria nodorum (strain SN15 / ATCC MYA-4574 / FGSC 10173) (Glume blotch fungus).